The primary structure comprises 76 residues: Small ribosomal subunit protein bS18 (76 aa).

It belongs to the bacterial ribosomal protein bS18 family. Part of the 30S ribosomal subunit. Forms a tight heterodimer with protein bS6.

In terms of biological role, binds as a heterodimer with protein bS6 to the central domain of the 16S rRNA, where it helps stabilize the platform of the 30S subunit. In Brevibacillus brevis (strain 47 / JCM 6285 / NBRC 100599), this protein is Small ribosomal subunit protein bS18.